The primary structure comprises 338 residues: Ketol-acid reductoisomerase (NADP(+)) (338 aa).

A KARI N-terminal Rossmann domain is found at 1-181 (MKVYYENDAD…GGTKAGVIET (181 aa)). NADP(+) contacts are provided by residues 24-27 (FGSQ), Lys-47, Ser-50, Ser-52, and 82-85 (DQVQ). The active site involves His-107. An NADP(+)-binding site is contributed by Gly-133. The region spanning 182–327 (NFKDETETDL…EKLRGMMSWL (146 aa)) is the KARI C-terminal knotted domain. Asp-190, Glu-194, Glu-226, and Glu-230 together coordinate Mg(2+). Ser-251 is a substrate binding site.

The protein belongs to the ketol-acid reductoisomerase family. Mg(2+) serves as cofactor.

It carries out the reaction (2R)-2,3-dihydroxy-3-methylbutanoate + NADP(+) = (2S)-2-acetolactate + NADPH + H(+). The catalysed reaction is (2R,3R)-2,3-dihydroxy-3-methylpentanoate + NADP(+) = (S)-2-ethyl-2-hydroxy-3-oxobutanoate + NADPH + H(+). It functions in the pathway amino-acid biosynthesis; L-isoleucine biosynthesis; L-isoleucine from 2-oxobutanoate: step 2/4. Its pathway is amino-acid biosynthesis; L-valine biosynthesis; L-valine from pyruvate: step 2/4. Functionally, involved in the biosynthesis of branched-chain amino acids (BCAA). Catalyzes an alkyl-migration followed by a ketol-acid reduction of (S)-2-acetolactate (S2AL) to yield (R)-2,3-dihydroxy-isovalerate. In the isomerase reaction, S2AL is rearranged via a Mg-dependent methyl migration to produce 3-hydroxy-3-methyl-2-ketobutyrate (HMKB). In the reductase reaction, this 2-ketoacid undergoes a metal-dependent reduction by NADPH to yield (R)-2,3-dihydroxy-isovalerate. The protein is Ketol-acid reductoisomerase (NADP(+)) of Chloroherpeton thalassium (strain ATCC 35110 / GB-78).